A 516-amino-acid polypeptide reads, in one-letter code: Probable fucosyltransferase 8 (516 aa).

Residues I5–F25 traverse the membrane as a helical; Signal-anchor for type II membrane protein segment. Over N26–N516 the chain is Lumenal. Residues N35, N116, N211, N362, and N463 are each glycosylated (N-linked (GlcNAc...) asparagine).

The protein belongs to the glycosyltransferase 37 family. In terms of tissue distribution, expressed in leaves and stems.

The protein resides in the golgi apparatus. It localises to the golgi stack membrane. It participates in protein modification; protein glycosylation. In terms of biological role, may be involved in cell wall biosynthesis. May act as a fucosyltransferase. The sequence is that of Probable fucosyltransferase 8 (FUT8) from Arabidopsis thaliana (Mouse-ear cress).